The sequence spans 470 residues: Uronate isomerase (470 aa).

The protein belongs to the metallo-dependent hydrolases superfamily. Uronate isomerase family.

The catalysed reaction is D-glucuronate = D-fructuronate. It catalyses the reaction aldehydo-D-galacturonate = keto-D-tagaturonate. It participates in carbohydrate metabolism; pentose and glucuronate interconversion. The protein is Uronate isomerase of Klebsiella pneumoniae (strain 342).